The primary structure comprises 861 residues: MRVKEKYQHLWRWGWKWGTMLLGILMICSATEKLWVTVYYGVPVWKEATTTLFCASDAKAYDTEVHNVWATHACVPTDPNPQEVVLVNVTENFNMWKNDMVEQMHEDIISLWDQSLKPCVKLTPLCVSLKCTDLGNATNTNSSNTNSSSGEMMMEKGEIKNCSFNISTSIRGKVQKEYAFFYKLDIIPIDNDTTSYTLTSCNTSVITQACPKVSFEPIPIHYCAPAGFAILKCNNKTFNGTGPCTNVSTVQCTHGIRPVVSTQLLLNGSLAEEEVVIRSANFTDNAKTIIVQLNQSVEINCTRPNNNTRKSIRIQRGPGRAFVTIGKIGNMRQAHCNISRAKWNATLKQIASKLREQFGNNKTIIFKQSSGGDPEIVTHSFNCGGEFFYCNSTQLFNSTWFNSTWSTEGSNNTEGSDTITLPCRIKQFINMWQEVGKAMYAPPISGQIRCSSNITGLLLTRDGGNNNNGSEIFRPGGGDMRDNWRSELYKYKVVKIEPLGVAPTKAKRRVVQREKRAVGIGALFLGFLGAAGSTMGARSMTLTVQARQLLSGIVQQQNNLLRAIEAQQHLLQLTVWGIKQLQARILAVERYLKDQQLLGIWGCSGKLICTTAVPWNASWSNKSLEQIWNNMTWMEWDREINNYTSLIHSLIEESQNQQEKNEQELLELDKWASLWNWFNITNWLWYIKIFIMIVGGLVGLRIVFAVLSIVNRVRQGYSPLSFQTHLPTPRGPDRPEGIEEEGGERDRDRSIRLVNGSLALIWDDLRSLCLFSYHRLRDLLLIVTRIVELLGRRGWEALKYWWNLLQYWSQELKNSAVSLLNATAIAVAEGTDRVIEVVQGACRAIRHIPRRIRQGLERILL.

The signal sequence occupies residues 1-32 (MRVKEKYQHLWRWGWKWGTMLLGILMICSATE). Residues 33-689 (KLWVTVYYGV…ITNWLWYIKI (657 aa)) are Extracellular-facing. A disulfide bond links Cys54 and Cys74. Residues Asn88, Asn136, Asn141, Asn146, Asn161, and Asn165 are each glycosylated (N-linked (GlcNAc...) asparagine; by host). Intrachain disulfides connect Cys119–Cys210, Cys126–Cys201, Cys131–Cys162, Cys223–Cys252, and Cys233–Cys244. Residues 131–161 (CTDLGNATNTNSSNTNSSSGEMMMEKGEIKN) are V1. Residues 162-201 (CSFNISTSIRGKVQKEYAFFYKLDIIPIDNDTTSYTLTSC) form a V2 region. The Putative binding site to alpha-4/beta-7 integrin motif lies at 184–186 (LDI). Asn191, Asn202, Asn235, Asn239, Asn246, Asn267, Asn281, Asn294, Asn300, Asn306, Asn337, Asn344, and Asn361 each carry an N-linked (GlcNAc...) asparagine; by host glycan. Residues 301-335 (CTRPNNNTRKSIRIQRGPGRAFVTIGKIGNMRQAH) are V3. The cysteines at positions 301 and 336 are disulfide-linked. Residues 369–379 (SSGGDPEIVTH) form a CD4-binding loop region. Cystine bridges form between Cys383/Cys450 and Cys390/Cys423. A V4 region spans residues 390-423 (CNSTQLFNSTWFNSTWSTEGSNNTEGSDTITLPC). N-linked (GlcNAc...) asparagine; by host glycosylation is found at Asn391, Asn397, Asn402, Asn411, Asn453, and Asn468. V5 stretches follow at residues 466-476 (NNNGSEIFRPG) and 468-476 (NGSEIFRPG). The segment at 517–537 (AVGIGALFLGFLGAAGSTMGA) is fusion peptide. The interval 579–597 (KQLQARILAVERYLKDQQL) is immunosuppression. An intrachain disulfide couples Cys603 to Cys609. N-linked (GlcNAc...) asparagine; by host glycosylation is found at Asn616, Asn621, Asn630, Asn642, and Asn679. A coiled-coil region spans residues 638–672 (REINNYTSLIHSLIEESQNQQEKNEQELLELDKWA). The MPER; binding to GalCer stretch occupies residues 667 to 688 (ELDKWASLWNWFNITNWLWYIK). The helical transmembrane segment at 690–710 (FIMIVGGLVGLRIVFAVLSIV) threads the bilayer. Over 711–861 (NRVRQGYSPL…IRQGLERILL (151 aa)) the chain is Cytoplasmic. Positions 717–720 (YSPL) match the YXXL motif; contains endocytosis signal motif. The interval 723–747 (QTHLPTPRGPDRPEGIEEEGGERDR) is disordered. Residues Cys769 and Cys842 are each lipidated (S-palmitoyl cysteine; by host). A Di-leucine internalization motif motif is present at residues 860–861 (LL).

It belongs to the HIV-1 env protein family. As to quaternary structure, the mature envelope protein (Env) consists of a homotrimer of non-covalently associated gp120-gp41 heterodimers. The resulting complex protrudes from the virus surface as a spike. There seems to be as few as 10 spikes on the average virion. Interacts with host CD4, CCR5 and CXCR4. Gp120 also interacts with the C-type lectins CD209/DC-SIGN and CLEC4M/DC-SIGNR (collectively referred to as DC-SIGN(R)). Gp120 and gp41 interact with GalCer. Gp120 interacts with host ITGA4/ITGB7 complex; on CD4+ T-cells, this interaction results in rapid activation of integrin ITGAL/LFA-1, which facilitates efficient cell-to-cell spreading of HIV-1. Gp120 interacts with cell-associated heparan sulfate; this interaction increases virus infectivity on permissive cells and may be involved in infection of CD4- cells. The mature envelope protein (Env) consists of a homotrimer of non-covalently associated gp120-gp41 heterodimers. The resulting complex protrudes from the virus surface as a spike. There seems to be as few as 10 spikes on the average virion. In terms of processing, highly glycosylated by host. The high number of glycan on the protein is reffered to as 'glycan shield' because it contributes to hide protein sequence from adaptive immune system. Palmitoylation of the transmembrane protein and of Env polyprotein (prior to its proteolytic cleavage) is essential for their association with host cell membrane lipid rafts. Palmitoylation is therefore required for envelope trafficking to classical lipid rafts, but not for viral replication. Post-translationally, specific enzymatic cleavages in vivo yield mature proteins. Envelope glycoproteins are synthesized as an inactive precursor that is heavily N-glycosylated and processed likely by host cell furin in the Golgi to yield the mature SU and TM proteins. The cleavage site between SU and TM requires the minimal sequence [KR]-X-[KR]-R. About 2 of the 9 disulfide bonds of gp41 are reduced by P4HB/PDI, following binding to CD4 receptor.

It localises to the virion membrane. Its subcellular location is the host cell membrane. It is found in the host endosome membrane. Oligomerizes in the host endoplasmic reticulum into predominantly trimers. In a second time, gp160 transits in the host Golgi, where glycosylation is completed. The precursor is then proteolytically cleaved in the trans-Golgi and thereby activated by cellular furin or furin-like proteases to produce gp120 and gp41. Its function is as follows. Attaches the virus to the host lymphoid cell by binding to the primary receptor CD4. This interaction induces a structural rearrangement creating a high affinity binding site for a chemokine coreceptor like CXCR4 and/or CCR5. Acts as a ligand for CD209/DC-SIGN and CLEC4M/DC-SIGNR, which are respectively found on dendritic cells (DCs), and on endothelial cells of liver sinusoids and lymph node sinuses. These interactions allow capture of viral particles at mucosal surfaces by these cells and subsequent transmission to permissive cells. HIV subverts the migration properties of dendritic cells to gain access to CD4+ T-cells in lymph nodes. Virus transmission to permissive T-cells occurs either in trans (without DCs infection, through viral capture and transmission), or in cis (following DCs productive infection, through the usual CD4-gp120 interaction), thereby inducing a robust infection. In trans infection, bound virions remain infectious over days and it is proposed that they are not degraded, but protected in non-lysosomal acidic organelles within the DCs close to the cell membrane thus contributing to the viral infectious potential during DCs' migration from the periphery to the lymphoid tissues. On arrival at lymphoid tissues, intact virions recycle back to DCs' cell surface allowing virus transmission to CD4+ T-cells. In terms of biological role, acts as a class I viral fusion protein. Under the current model, the protein has at least 3 conformational states: pre-fusion native state, pre-hairpin intermediate state, and post-fusion hairpin state. During fusion of viral and target intracellular membranes, the coiled coil regions (heptad repeats) assume a trimer-of-hairpins structure, positioning the fusion peptide in close proximity to the C-terminal region of the ectodomain. The formation of this structure appears to drive apposition and subsequent fusion of viral and target cell membranes. Complete fusion occurs in host cell endosomes and is dynamin-dependent, however some lipid transfer might occur at the plasma membrane. The virus undergoes clathrin-dependent internalization long before endosomal fusion, thus minimizing the surface exposure of conserved viral epitopes during fusion and reducing the efficacy of inhibitors targeting these epitopes. Membranes fusion leads to delivery of the nucleocapsid into the cytoplasm. This chain is Envelope glycoprotein gp160, found in Homo sapiens (Human).